The following is a 309-amino-acid chain: UPF0282 protein Msed_0584 (309 aa).

The protein belongs to the UPF0282 family.

The polypeptide is UPF0282 protein Msed_0584 (Metallosphaera sedula (strain ATCC 51363 / DSM 5348 / JCM 9185 / NBRC 15509 / TH2)).